The chain runs to 141 residues: Drosulfakinins (141 aa).

The signal sequence occupies residues 1 to 31; sequence MGLRSCTHLATLFMTLWAVAFCFLVVVPIPA. Residues 32 to 73 constitute a propeptide that is removed on maturation; that stretch reads QTTSLQNAKDDRRLQELESKIGAESDQTNANLVGPSFSRFGD. A Phenylalanine amide modification is found at Phe82. Residues 86–111 constitute a propeptide that is removed on maturation; that stretch reads VPLISRPMIPIELDLLMDNDDERTKA. Sulfotyrosine is present on Tyr117. Phe122 bears the Phenylalanine amide mark. Position 134 is a sulfotyrosine (Tyr134). Residue Phe139 is modified to Phenylalanine amide.

This sequence belongs to the gastrin/cholecystokinin family.

It is found in the secreted. Functionally, drosulfakinin-0 (DSK 0) plays diverse biological roles including regulating gut muscle contraction in adults but not in larvae. The chain is Drosulfakinins from Drosophila simulans (Fruit fly).